The chain runs to 1435 residues: Cardiac-enriched FHL2-interacting protein (1435 aa).

Disordered stretches follow at residues 109–176 (EEKY…PPKF), 203–234 (SNTHQNSYQPGRKHGEQESSKNPEMACHGSSS), 250–270 (FPSPHHKPVTGEPGRGKGTFL), and 291–311 (KDTAGTVPESKAPKHYGDTTL). Threonine 120 carries the phosphothreonine modification. Over residues 133–147 (LRSSNKPVSKVSTLI) the composition is skewed to polar residues. Residues 149–160 (SFDRTESQRCES) are compositionally biased toward basic and acidic residues. Serine 323 is modified (phosphoserine). 6 disordered regions span residues 362–592 (EGKA…LTLS), 609–772 (AERS…EKEN), 795–847 (SQGE…SPSS), 1007–1108 (PEGD…ARVT), 1138–1261 (SPRG…PGGP), and 1363–1435 (QGPR…EGIS). Over residues 389–402 (KGKESLQDTLEEKT) the composition is skewed to basic and acidic residues. The residue at position 470 (serine 470) is a Phosphoserine. Composition is skewed to basic and acidic residues over residues 479–493 (QEKEPSECQSRDSYK), 522–535 (VLDEKTRGKVDGKQ), 609–620 (AERSSYENKEVE), and 650–667 (CNRDPEPGGATEKMKTHQ). Residues 668–679 (LENGLSRSVSQE) show a composition bias toward polar residues. The span at 727–741 (KFSTSSSDQSFASFD) shows a compositional bias: low complexity. Basic and acidic residues predominate over residues 751–772 (NQREDRRKDVSAGDSQKDEKEN). Position 816 is a phosphoserine (serine 816). Positions 831 to 847 (KGTTFSQAKDLTPSPSS) are enriched in polar residues. Low complexity predominate over residues 1055–1066 (NSPNPGSPGESS). Over residues 1067–1082 (ACSPAASNIWEESSQA) the composition is skewed to polar residues. Positions 1083–1093 (PGGPELLPEEP) are enriched in low complexity. Residues 1094-1105 (NQASPWASSSPA) show a composition bias toward polar residues. A compositionally biased stretch (basic residues) spans 1182–1193 (RRAKKLASKRRK). The span at 1194–1211 (TDQAQEKHGESQEGKPCP) shows a compositional bias: basic and acidic residues. Residues 1424–1435 (DDLEDFATEGIS) are compositionally biased toward acidic residues.

Interacts with FHL2. Expressed in the heart and skeletal muscle.

It is found in the cytoplasm. It localises to the myofibril. Its subcellular location is the sarcomere. The protein localises to the z line. In terms of biological role, plays an important role in cardiomyocyte hypertrophy via activation of the calcineurin/NFAT signaling pathway. This Homo sapiens (Human) protein is Cardiac-enriched FHL2-interacting protein.